The primary structure comprises 482 residues: Glutamate--tRNA ligase (482 aa).

Positions 10–20 (PSPTGFLHIGN) match the 'HIGH' region motif. The 'KMSKS' region motif lies at 253–257 (KLSKR). K256 is a binding site for ATP.

Belongs to the class-I aminoacyl-tRNA synthetase family. Glutamate--tRNA ligase type 1 subfamily. Monomer.

The protein resides in the cytoplasm. It carries out the reaction tRNA(Glu) + L-glutamate + ATP = L-glutamyl-tRNA(Glu) + AMP + diphosphate. Its function is as follows. Catalyzes the attachment of glutamate to tRNA(Glu) in a two-step reaction: glutamate is first activated by ATP to form Glu-AMP and then transferred to the acceptor end of tRNA(Glu). The chain is Glutamate--tRNA ligase from Mesoplasma florum (strain ATCC 33453 / NBRC 100688 / NCTC 11704 / L1) (Acholeplasma florum).